The sequence spans 712 residues: Ribosome-releasing factor 2, mitochondrial (712 aa).

The transit peptide at 1 to 28 directs the protein to the mitochondrion; the sequence is MQYSLLSAQLRCSRFLLRQQAPFINRCY. The region spanning 30-309 is the tr-type G domain; sequence DDIRNIGILA…AVNAYLPTPN (280 aa). Residues 39–46, 103–107, and 157–160 contribute to the GTP site; these read AHIDAGKT, DTPGH, and NKMD.

This sequence belongs to the TRAFAC class translation factor GTPase superfamily. Classic translation factor GTPase family. EF-G/EF-2 subfamily.

It localises to the mitochondrion. Mitochondrial GTPase that mediates the disassembly of ribosomes from messenger RNA at the termination of mitochondrial protein biosynthesis. Not involved in the GTP-dependent ribosomal translocation step during translation elongation. This chain is Ribosome-releasing factor 2, mitochondrial, found in Drosophila virilis (Fruit fly).